A 125-amino-acid polypeptide reads, in one-letter code: RxLR effector protein Avh6 (125 aa).

The signal sequence occupies residues 1-25 (MRLSSTTFVVLAAVLLASGTAVSKA). The RxLR-dEER signature appears at 48 to 70 (RFLRSHHTEDGKAKLSNYDNEER).

It belongs to the RxLR effector family.

It localises to the secreted. The protein localises to the host cell. Its function is as follows. Effector that suppresses plant defense responses during the early stages of pathogen infection. Suppresses cell death induced by effectors and PAMPs in plant hosts. Triggers a hypersensitive response (HR) in the presence of Rps1d. Suppresses BAX-induced cell death and enhanced P.capsici infection in Nicotiana benthamiana. Also suppresses effector-triggered immunity induction by associating with Avr1b and Rps1b, suggesting a role in suppressing plant immunity. The chain is RxLR effector protein Avh6 from Phytophthora sojae (Soybean stem and root rot agent).